The primary structure comprises 1271 residues: DNA-directed RNA polymerase subunit beta (1271 aa).

It belongs to the RNA polymerase beta chain family. The RNAP catalytic core consists of 2 alpha, 1 beta, 1 beta' and 1 omega subunit. When a sigma factor is associated with the core the holoenzyme is formed, which can initiate transcription.

It carries out the reaction RNA(n) + a ribonucleoside 5'-triphosphate = RNA(n+1) + diphosphate. Its function is as follows. DNA-dependent RNA polymerase catalyzes the transcription of DNA into RNA using the four ribonucleoside triphosphates as substrates. The chain is DNA-directed RNA polymerase subunit beta from Acholeplasma laidlawii (strain PG-8A).